The primary structure comprises 195 residues: uncharacterized protein (195 aa).

Disordered stretches follow at residues 1–51 (MTHN…GPSY) and 160–195 (SYSQQQEPQHYYKKHKHHSHHRPKHVKSSRSCKSCN). The span at 13–28 (SYQNQAPQPQYYTRQP) shows a compositional bias: polar residues. Positions 170–189 (YYKKHKHHSHHRPKHVKSSR) are enriched in basic residues.

This is an uncharacterized protein from Acanthamoeba polyphaga mimivirus (APMV).